A 160-amino-acid polypeptide reads, in one-letter code: MGVTKKPDLNDPVLRAKLAKGMGHNYYGEPAWPNDLLYIFPVVILGTIACNVGLAILEPSMLGEPADPFATPLEILPEWYFFPVFQILRTVPNKLLGVLLMVSVPSGLLTVPFLENVNKFQNPFRRPVATTVFLIGTVVALWLGIGATLPIDKSLTLGLF.

3 consecutive transmembrane segments (helical) span residues 36–56, 95–115, and 131–151; these read LLYI…GLAI, LLGV…PFLE, and TVFL…TLPI.

The protein belongs to the cytochrome b family. PetD subfamily. The 4 large subunits of the cytochrome b6-f complex are cytochrome b6, subunit IV (17 kDa polypeptide, petD), cytochrome f and the Rieske protein, while the 4 small subunits are petG, petL, petM and petN. The complex functions as a dimer.

The protein localises to the plastid. Its subcellular location is the chloroplast thylakoid membrane. Component of the cytochrome b6-f complex, which mediates electron transfer between photosystem II (PSII) and photosystem I (PSI), cyclic electron flow around PSI, and state transitions. In Oenothera elata subsp. hookeri (Hooker's evening primrose), this protein is Cytochrome b6-f complex subunit 4.